A 475-amino-acid chain; its full sequence is Putative poly(A) polymerase catalytic subunit (475 aa).

This sequence belongs to the poxviridae poly(A) polymerase catalytic subunit family. Highly divergent.

It localises to the virion. It carries out the reaction RNA(n) + ATP = RNA(n)-3'-adenine ribonucleotide + diphosphate. In terms of biological role, polymerase that creates the 3'-poly(A) tail of mRNA's. The polypeptide is Putative poly(A) polymerase catalytic subunit (Ornithodoros (relapsing fever ticks)).